The primary structure comprises 109 residues: Cell division protein ZapA (109 aa).

Residues 21 to 99 are a coiled coil; that stretch reads PEQRDALNQA…IEQALLEQGR (79 aa).

The protein belongs to the ZapA family. Type 1 subfamily. As to quaternary structure, homodimer. Interacts with FtsZ.

The protein resides in the cytoplasm. Its function is as follows. Activator of cell division through the inhibition of FtsZ GTPase activity, therefore promoting FtsZ assembly into bundles of protofilaments necessary for the formation of the division Z ring. It is recruited early at mid-cell but it is not essential for cell division. This is Cell division protein ZapA from Klebsiella pneumoniae subsp. pneumoniae (strain ATCC 700721 / MGH 78578).